Here is a 144-residue protein sequence, read N- to C-terminus: 3-dehydroquinate dehydratase (144 aa).

Y22 serves as the catalytic Proton acceptor. 3 residues coordinate substrate: N73, H79, and D86. Catalysis depends on H99, which acts as the Proton donor. Residues 100–101 (LS) and R110 contribute to the substrate site.

It belongs to the type-II 3-dehydroquinase family. In terms of assembly, homododecamer.

The catalysed reaction is 3-dehydroquinate = 3-dehydroshikimate + H2O. It functions in the pathway metabolic intermediate biosynthesis; chorismate biosynthesis; chorismate from D-erythrose 4-phosphate and phosphoenolpyruvate: step 3/7. Catalyzes a trans-dehydration via an enolate intermediate. This is 3-dehydroquinate dehydratase from Trichlorobacter lovleyi (strain ATCC BAA-1151 / DSM 17278 / SZ) (Geobacter lovleyi).